The chain runs to 78 residues: Major outer membrane lipoprotein Lpp (78 aa).

The signal sequence occupies residues Met1–Gly20. Cys21 is lipidated: N-palmitoyl cysteine. Cys21 is lipidated: S-diacylglycerol cysteine. The stretch at Ser22–Ser75 forms a coiled coil. Repeats lie at residues Asn24–Val34 and Asn38–Val48. N6-murein peptidoglycan lysine is present on Lys78.

The protein belongs to the Lpp family. In terms of assembly, homotrimer.

It is found in the cell outer membrane. The protein localises to the secreted. The protein resides in the cell wall. A highly abundant outer membrane lipoprotein that controls the distance between the inner and outer membranes. The only protein known to be covalently linked to the peptidoglycan network (PGN). Also non-covalently binds the PGN. The link between the cell outer membrane and PGN contributes to maintenance of the structural and functional integrity of the cell envelope, and maintains the correct distance between the PGN and the outer membrane. This chain is Major outer membrane lipoprotein Lpp, found in Erwinia amylovora (Fire blight bacteria).